The sequence spans 138 residues: Large ribosomal subunit protein bL17 (138 aa).

The segment at 118 to 138 (RDEDAKGKDSGPSQDGAAEAA) is disordered.

This sequence belongs to the bacterial ribosomal protein bL17 family. In terms of assembly, part of the 50S ribosomal subunit. Contacts protein L32.

The sequence is that of Large ribosomal subunit protein bL17 from Rhodopseudomonas palustris (strain HaA2).